A 118-amino-acid polypeptide reads, in one-letter code: Large ribosomal subunit protein bL19 (118 aa).

It belongs to the bacterial ribosomal protein bL19 family.

This protein is located at the 30S-50S ribosomal subunit interface and may play a role in the structure and function of the aminoacyl-tRNA binding site. The protein is Large ribosomal subunit protein bL19 of Saccharophagus degradans (strain 2-40 / ATCC 43961 / DSM 17024).